Consider the following 232-residue polypeptide: Probable metallo-hydrolase M6_Spy0554 (232 aa).

7 residues coordinate Zn(2+): H75, H77, D79, H80, H155, D174, and H215.

The cofactor is Zn(2+).

The polypeptide is Probable metallo-hydrolase M6_Spy0554 (Streptococcus pyogenes serotype M6 (strain ATCC BAA-946 / MGAS10394)).